The chain runs to 356 residues: S-adenosylmethionine:tRNA ribosyltransferase-isomerase (356 aa).

Belongs to the QueA family. As to quaternary structure, monomer.

The protein localises to the cytoplasm. It catalyses the reaction 7-aminomethyl-7-carbaguanosine(34) in tRNA + S-adenosyl-L-methionine = epoxyqueuosine(34) in tRNA + adenine + L-methionine + 2 H(+). The protein operates within tRNA modification; tRNA-queuosine biosynthesis. In terms of biological role, transfers and isomerizes the ribose moiety from AdoMet to the 7-aminomethyl group of 7-deazaguanine (preQ1-tRNA) to give epoxyqueuosine (oQ-tRNA). This is S-adenosylmethionine:tRNA ribosyltransferase-isomerase from Cronobacter sakazakii (strain ATCC BAA-894) (Enterobacter sakazakii).